We begin with the raw amino-acid sequence, 164 residues long: Lipoprotein signal peptidase (164 aa).

The next 3 membrane-spanning stretches (helical) occupy residues 12 to 32 (WLWL…LILQ), 70 to 90 (WFFA…MYRS), and 102 to 122 (ALII…GFVV). Catalysis depends on residues Asp-123 and Asp-141. Residues 137-157 (FNLADTAICVGAALIVLEGFL) traverse the membrane as a helical segment.

Belongs to the peptidase A8 family.

It is found in the cell inner membrane. It catalyses the reaction Release of signal peptides from bacterial membrane prolipoproteins. Hydrolyzes -Xaa-Yaa-Zaa-|-(S,diacylglyceryl)Cys-, in which Xaa is hydrophobic (preferably Leu), and Yaa (Ala or Ser) and Zaa (Gly or Ala) have small, neutral side chains.. Its pathway is protein modification; lipoprotein biosynthesis (signal peptide cleavage). This protein specifically catalyzes the removal of signal peptides from prolipoproteins. This is Lipoprotein signal peptidase from Shigella sonnei (strain Ss046).